Here is a 633-residue protein sequence, read N- to C-terminus: Glutathione S-transferase C-terminal domain-containing protein (633 aa).

The GST C-terminal domain maps to 130-332 (LGFKKTCLKA…QEVPGVKTAA (203 aa)). The interval 191 to 233 (NDDKLRRQKLKQQKADGVGPPLTKGKAKSKVHTQETSEGLDSS) is disordered. Over residues 224–233 (QETSEGLDSS) the composition is skewed to polar residues. The residue at position 233 (serine 233) is a Phosphoserine.

It belongs to the GSTCD family. As to expression, widely expressed in cell types relevant to airway function, including airway smooth muscle cells and epithelial cells.

It is found in the cytoplasm. The sequence is that of Glutathione S-transferase C-terminal domain-containing protein (GSTCD) from Homo sapiens (Human).